Consider the following 217-residue polypeptide: MAAYRADDDYDFLYKVVLIGDSGVGKSNLLSRFTRNEFSLESKSTIGVEFATRSIHVDEKIVKAQIWDTAGQERYRAITSAYYRGAVGALLVYDVTRHVTFENVERWLKELRDHTEANIVIMLVGNKADLRHLRAVSTEDAKAFAERENTFFMETSALEALNVENAFTEVLSQIYRVASKKALDIGDDHTTLPKGQSINVGSKDDVSEVKKVGCCSS.

20–27 is a GTP binding site; that stretch reads GDSGVGKS. Positions 42-50 match the Effector region motif; sequence SKSTIGVEF. Residues 68–72, 126–129, and 156–157 contribute to the GTP site; these read DTAGQ, NKAD, and SA. 2 S-geranylgeranyl cysteine lipidation sites follow: C214 and C215.

It belongs to the small GTPase superfamily. Rab family.

Its subcellular location is the cell membrane. In terms of biological role, intracellular vesicle trafficking and protein transport. The protein is Ras-related protein RABA1g (RABA1G) of Arabidopsis thaliana (Mouse-ear cress).